Reading from the N-terminus, the 251-residue chain is uncharacterized protein (251 aa).

The next 4 membrane-spanning stretches (helical) occupy residues 56–76, 104–124, 184–204, and 208–228; these read LAVV…TLVA, IITV…FLLT, HGFV…LIIV, and YLIA…ANIS.

The protein resides in the membrane. This is an uncharacterized protein from Caenorhabditis elegans.